Reading from the N-terminus, the 498-residue chain is Glycerol kinase (498 aa).

T12 is a binding site for ADP. ATP is bound by residues T12, T13, and S14. Sn-glycerol 3-phosphate is bound at residue T12. R16 is an ADP binding site. R82, E83, Y134, and D243 together coordinate sn-glycerol 3-phosphate. R82, E83, Y134, D243, and Q244 together coordinate glycerol. T265 and G308 together coordinate ADP. ATP is bound by residues T265, G308, Q312, and G409. G409 and N413 together coordinate ADP.

This sequence belongs to the FGGY kinase family. Homotetramer and homodimer (in equilibrium).

The enzyme catalyses glycerol + ATP = sn-glycerol 3-phosphate + ADP + H(+). It functions in the pathway polyol metabolism; glycerol degradation via glycerol kinase pathway; sn-glycerol 3-phosphate from glycerol: step 1/1. Activated by phosphorylation and inhibited by fructose 1,6-bisphosphate (FBP). Its function is as follows. Key enzyme in the regulation of glycerol uptake and metabolism. Catalyzes the phosphorylation of glycerol to yield sn-glycerol 3-phosphate. This is Glycerol kinase from Agathobacter rectalis (strain ATCC 33656 / DSM 3377 / JCM 17463 / KCTC 5835 / VPI 0990) (Eubacterium rectale).